Consider the following 41-residue polypeptide: Photosystem I reaction center subunit IX (41 aa).

A helical transmembrane segment spans residues 7–27; it reads YLSTAPVVAFAWLTFTAGFII.

Belongs to the PsaJ family.

Its subcellular location is the plastid. The protein localises to the chloroplast thylakoid membrane. In terms of biological role, may help in the organization of the PsaE and PsaF subunits. The sequence is that of Photosystem I reaction center subunit IX from Stigeoclonium helveticum (Green alga).